The sequence spans 85 residues: Protein Vpu (85 aa).

At Met-1–Leu-7 the chain is on the extracellular side. A helical membrane pass occupies residues Ala-8–Arg-28. Residues Ile-29–Leu-85 lie on the Cytoplasmic side of the membrane.

This sequence belongs to the HIV-1 VPU protein family. As to quaternary structure, homopentamer. Interacts with host CD4 and BRTC; these interactions induce proteasomal degradation of CD4. Interacts with host BST2; this interaction leads to the degradation of host BST2. Interacts with host FBXW11. Interacts with host AP1M1; this interaction plays a role in the mistrafficking and subsequent degradation of host BST2. Interacts with host RANBP2; this interaction allows Vpu to down-regulate host BLM sumoylation. Phosphorylated by host CK2. This phosphorylation is necessary for interaction with human BTRC and degradation of CD4.

The protein resides in the host membrane. With respect to regulation, ion channel activity is inhibited by hexamethylene amiloride in vitro. Enhances virion budding by targeting host CD4 and Tetherin/BST2 to proteasome degradation. Degradation of CD4 prevents any unwanted premature interactions between viral Env and its host receptor CD4 in the endoplasmic reticulum. Degradation of antiretroviral protein Tetherin/BST2 is important for virion budding, as BST2 tethers new viral particles to the host cell membrane. Mechanistically, Vpu bridges either CD4 or BST2 to BTRC, a substrate recognition subunit of the Skp1/Cullin/F-box protein E3 ubiquitin ligase, induces their ubiquitination and subsequent proteasomal degradation. The alteration of the E3 ligase specificity by Vpu seems to promote the degradation of host IKBKB, leading to NF-kappa-B down-regulation and subsequent apoptosis. Acts as a viroporin that forms an oligomeric ion channel in membranes. Modulates the host DNA repair mechanisms to promote degradation of nuclear viral cDNA in cells that are already productively infected in order to suppress immune sensing and proviral hyper-integration (superinfection). Manipulates PML-NBs and modulates SUMOylation of host BLM protein thereby enhancing its DNA-end processing activity toward viral unintegrated linear DNA. Also inhibits RAD52-mediated homologous repair of viral cDNA, preventing the generation of dead-end circular forms of single copies of the long terminal repeat and permitting sustained nucleolytic attack. The chain is Protein Vpu from Human immunodeficiency virus type 1 group O (isolate MVP5180) (HIV-1).